A 142-amino-acid chain; its full sequence is MAIAYYAEDIQLPAIKKKAVSGWIKAVAETYGKKTGDISYIFCSDEKILEVNRQYLQHDYYTDIITFDYTEGNKISGDLFISLDTVRTNAETFHTDYNEELHRTIIHGILHLCGINDKGPGEREIMEENENRALAILPEECR.

Zn(2+)-binding residues include His107, His111, and Asp117.

This sequence belongs to the endoribonuclease YbeY family. It depends on Zn(2+) as a cofactor.

It localises to the cytoplasm. Its function is as follows. Single strand-specific metallo-endoribonuclease involved in late-stage 70S ribosome quality control and in maturation of the 3' terminus of the 16S rRNA. The polypeptide is Endoribonuclease YbeY (Parabacteroides distasonis (strain ATCC 8503 / DSM 20701 / CIP 104284 / JCM 5825 / NCTC 11152)).